The chain runs to 382 residues: MRGRQKIAIVGAGLGGAAAATLLQQAGFDVEVFEQAPAFTRLGAGIHIGPNVMKIFRRMGLEQKLELMGSHPDFWFSRDGNTGDYLSRIPLGEFARREYGAAYITIHRGDLHALQIEAIQPGTVHFGKRLEKIVDEGDQVRLDFADGTHTVADIVIGADGIHSKIREELLGAEAPIYSGWVAHRALIRGVNLAQHADVFEPCVKWWSEDRHMMVYYTTGKRDEYYFVTGVPHEAWDFQGAFVDSSQEEMRAAFEGYHPTVQKLIDATESITKWPLRNRNPLPLWSRGRLVLLGDACHPMKPHMAQGACMAIEDAAMLTRCLQETGLSDHRTAFALYEANRKERASQVQSVSNANTWLYSQEDPAWVYGYDLYGQQLESGEAA.

Residues 1-25 (MRGRQKIAIVGAGLGGAAAATLLQQ) form the signal peptide. FAD-binding positions include glycine 15, 34–35 (EQ), histidine 47, arginine 108, and leucine 130. Histidine 47 serves as the catalytic Proton acceptor. Residue tyrosine 215 is the Proton acceptor of the active site. FAD is bound by residues aspartate 294 and 307 to 308 (AC).

The protein belongs to the 6-hydroxynicotinate 3-monooxygenase family. Monomer. Requires FAD as cofactor.

It catalyses the reaction 6-hydroxynicotinate + NADH + O2 + 2 H(+) = 2,5-dihydroxypyridine + CO2 + NAD(+) + H2O. The protein operates within cofactor degradation; nicotinate degradation. Flavin-dependent monooxygenase (FMO) that catalyzes the decarboxylative hydroxylation of 6-hydroxynicotinic acid (6-HNA) to 2,5-dihydroxypyridine (2,5-DHP) with concomitant oxidation of NADH, a step in the aerobic nicotinate degradation pathway. The polypeptide is 6-hydroxynicotinate 3-monooxygenase (Pseudomonas putida (strain ATCC 47054 / DSM 6125 / CFBP 8728 / NCIMB 11950 / KT2440)).